Reading from the N-terminus, the 145-residue chain is AP-2 complex subunit sigma (145 aa).

This sequence belongs to the adaptor complexes small subunit family. As to quaternary structure, adaptor protein complex 2 (AP-2) is a heterotetramer composed of two large adaptins (alpha-type subunit apl3 and beta-type subunit apl1), a medium chain (mu-type subunit apm4) and a small adaptin (sigma-type subunit aps2).

It is found in the cell membrane. Its subcellular location is the membrane. It localises to the coated pit. Component of the adaptor complexes which link clathrin to receptors in coated vesicles. Clathrin-associated protein complexes are believed to interact with the cytoplasmic tails of membrane proteins, leading to their selection and concentration. The chain is AP-2 complex subunit sigma (aps2) from Emericella nidulans (strain FGSC A4 / ATCC 38163 / CBS 112.46 / NRRL 194 / M139) (Aspergillus nidulans).